Consider the following 214-residue polypeptide: Octanoyltransferase (214 aa).

Positions 29–214 (SETLDEIWVL…QHLQKQLIPS (186 aa)) constitute a BPL/LPL catalytic domain. Residues 69 to 76 (RGGEITYH), 146 to 148 (ALG), and 159 to 161 (GLA) contribute to the substrate site. Cysteine 177 functions as the Acyl-thioester intermediate in the catalytic mechanism.

Belongs to the LipB family.

The protein localises to the cytoplasm. It carries out the reaction octanoyl-[ACP] + L-lysyl-[protein] = N(6)-octanoyl-L-lysyl-[protein] + holo-[ACP] + H(+). The protein operates within protein modification; protein lipoylation via endogenous pathway; protein N(6)-(lipoyl)lysine from octanoyl-[acyl-carrier-protein]: step 1/2. In terms of biological role, catalyzes the transfer of endogenously produced octanoic acid from octanoyl-acyl-carrier-protein onto the lipoyl domains of lipoate-dependent enzymes. Lipoyl-ACP can also act as a substrate although octanoyl-ACP is likely to be the physiological substrate. The protein is Octanoyltransferase of Polynucleobacter necessarius subsp. necessarius (strain STIR1).